We begin with the raw amino-acid sequence, 219 residues long: Transmembrane emp24 domain-containing protein 10 (219 aa).

The N-terminal stretch at 1–31 is a signal peptide; sequence MSGLFGPLSRPGPLPSAWLFLLLLGPSSVLG. Residues 1 to 142 are required for interaction with STX17; that stretch reads MSGLFGPLSR…KNYEEIAKVE (142 aa). The Lumenal segment spans residues 32-185; sequence ISFHLPVNSR…RDTNESTNTR (154 aa). Residues 41–193 form the GOLD domain; it reads RKCLREEIHK…TRVLYFSIFS (153 aa). Positions 147–178 are required for TMED10 and TMED2 cis-Golgi network localization; the sequence is LEVELRRLEDLSESIVNDFAYMKKREEEMRDT. Residues Arg171 and Arg176 each carry the dimethylated arginine modification. An N-linked (GlcNAc...) asparagine glycan is attached at Asn179. A helical transmembrane segment spans residues 186-206; sequence VLYFSIFSMFCLIGLATWQVF. Positions 204–219 are interaction with COPG1; it reads QVFYLRRFFKAKKLIE. Over 207–219 the chain is Cytoplasmic; sequence YLRRFFKAKKLIE. Residues 207-219 form an interaction with ARF1 and IL1B region; the sequence is YLRRFFKAKKLIE. The COPII vesicle coat-binding signature appears at 211–212; the sequence is FF. Positions 211–219 match the COPI vesicle coat-binding motif; that stretch reads FFKAKKLIE.

The protein belongs to the EMP24/GP25L family. In terms of assembly, predominantly dimeric and to a lesser extent monomeric in the ER. Monomer and dimer in ERGIC and cis-Golgi network. Forms homooligomer (via GOLD domain); the assembly is promoted by direct binding with leaderless cargos and may form a protein channel that facilitates cargo entry into the ERGIC. Forms heterooligomeric complexes with other members of the p24 family such as TMED2, TMED7 and TMED9. Interacts (via GOLD domain) with TMED2 (via GOLD domain); the complex is required for export of TMED10 from the ER to the cis-Golgi network; the complex is proposed to be involved in cis-Golgi network dynamics and / or biogenesis. Associates with the COPI vesicle coat subunits (coatomer). Tetramerization of the cytoplasmic domain at the Golgi membrane in vitro; the complex is proposed to interact with COPI coatomer and induce budding of the vesicles. Interacts with COPG1; the interaction involves TMED10 homodimer. Interacts with ARF1 (GDP-bound); the interaction probably involves a TMED10 oligomer. Interacts with SEC23A, SEC24B, SEC24C and SEC24D components of the coat protein complex II/COPII, indicative of an association of TMED10 with the COPII vesicle coat. Interacts with CD59. Interacts with MPPE1/PGAP5; the complex might recruit and sort GPI-anchored proteins to the ER-exit site, or the interaction might lead to recycling of PGAP5 between the ER and the Golgi. Interacts with F2LR1/PAR2. Interacts with KDELR2/ERD2; the interaction is disrupted by KDELR2 ligand. Found in a complex composed at least of SURF4, TMED2 and TMED10. Associates with the presenilin-dependent gamma-secretase complex. Interacts with STX17; the interaction is direct. Interacts with IL-1; the interaction is direct. Interacts with RAB21 (active GTP-bound form); the interaction is indirect and regulates TMED10 abundance and localization at the Golgi.

It localises to the endoplasmic reticulum membrane. The protein resides in the endoplasmic reticulum-Golgi intermediate compartment membrane. It is found in the golgi apparatus membrane. The protein localises to the golgi apparatus. Its subcellular location is the cis-Golgi network membrane. It localises to the trans-Golgi network membrane. The protein resides in the cytoplasmic vesicle. It is found in the secretory vesicle membrane. The protein localises to the cell membrane. Its subcellular location is the melanosome. Its function is as follows. Cargo receptor involved in protein vesicular trafficking and quality control in the endoplasmic reticulum (ER) and Golgi. The p24 protein family is a group of transmembrane proteins that bind coat protein complex I/COPI and coat protein complex II/COPII involved in vesicular trafficking between the membranes. Acts at the lumenal side for incorporation of secretory cargo molecules into transport vesicles and involved in vesicle coat formation at the cytoplasmic side. Mainly functions in the early secretory pathway and cycles between the ER, ER-Golgi intermediate compartment (ERGIC) and Golgi, mediating cargo transport through COPI and COPII-coated vesicles. In COPII vesicle-mediated anterograde transport, involved in the transport of GPI-anchored proteins by acting together with TMED2 as their cargo receptor; the function specifically implies SEC24C and SEC24D of the COPII vesicle coat and lipid raft-like microdomains of the ER. Recognizes GPI anchors structural remodeled in the ER by the GPI inositol-deacylase/PGAP1 and the metallophosphoesterase MPPE1/PGAP5. In COPI vesicle-mediated retrograde transport, involved in the biogenesis of COPI vesicles and vesicle coat recruitment. Involved in trafficking of amyloid beta A4 protein and soluble APP-beta release (independent from the modulation of gamma-secretase activity). Involved in the KDELR2-mediated retrograde transport of the toxin A subunit (CTX-A-K63)together with COPI and the COOH terminus of KDELR2. On Golgi membranes, acts as a primary receptor for ARF1-GDP, a GTP-binding protein involved in COPI-vesicle formation. Increases coatomer-dependent GTPase-activating activity of ARFGAP2 which mediates the hydrolysis of ARF1-bound GTP and therefore modulates protein trafficking from the Golgi apparatus. Involved in the exocytic trafficking of G protein-coupled receptors F2LR1/PAR2 (trypsin and tryspin-like enzyme receptor), OPRM1 (opioid receptor) and P2RY4 (UTD and UDP receptor) from the Golgi to the plasma membrane, thus contributing to receptor resensitization. In addition to its cargo receptor activity, may also act as a protein channel after oligomerization, facilitating the post-translational entry of leaderless cytoplasmic cargo into the ERGIC. Involved in the translocation into ERGIC, the vesicle entry and the secretion of leaderless cargos (lacking the secretion signal sequence), including the mature form of interleukin 1/IL-1 family members, the alpha-crystallin B chain HSPB5, the carbohydrate-binding proteins galectin-1/LGALS1 and galectin-3/LGALS3, the microtubule-associated protein Tau/MAPT, and the annexin A1/ANXA1; the translocation process is dependent on cargo protein unfolding and enhanced by chaperones HSP90AB1 and HSP90B1/GRP9. Could also associates with the presenilin-dependent gamma-secretase complex in order to regulate gamma-cleavages of the amyloid beta A4 protein to yield amyloid-beta 40/Abeta40. The sequence is that of Transmembrane emp24 domain-containing protein 10 from Mus musculus (Mouse).